Consider the following 468-residue polypeptide: MRMLPSYIPSPPRGVWYLGPLPVRAYAVCVITGIIVALLIGDRRLTARGGERGMTYDIALWAVPFGLIGGRLYHLATDWRTYFGDGGAGLAAALRIWDGGLGIWGAVTLGVMGAWIGCRRCGIPLPVLLDAVAPGVVLAQAIGRLGNYFNQELYGRETTMPWGLEIFYRRDPSGFDVPNSLDGVSTGQVAFVVQPTFLYELIWNVLVFVALIYIDRRFIIGHGRLFGFYVAFYCAGRFCVELLRDDPATLIAGIRINSFTSTFVFIGAVVYIILAPKGREAPGALRGSEYVVDEALEREPAELAAAAVASAASAVGPVGPGEPNQPDDVAEAVKAEVAEVTDEVAAESVVQVADRDGESTPAVEETSEADIEREQPGDLAGQAPAAHQVDAEAASAAPEEPAALASEAHDETEPEVPEKAAPIPDPAKPDELAVAGPGDDPAEPDGIRRQDDFSSRRRRWWRLRRRRQ.

The next 3 membrane-spanning stretches (helical) occupy residues 21 to 41, 56 to 76, and 96 to 116; these read LPVRAYAVCVITGIIVALLIG, YDIALWAVPFGLIGGRLYHLA, and IWDGGLGIWGAVTLGVMGAWI. Residue Arg-144 coordinates a 1,2-diacyl-sn-glycero-3-phospho-(1'-sn-glycerol). Transmembrane regions (helical) follow at residues 192–212, 218–238, and 256–276; these read VVQPTFLYELIWNVLVFVALI, FIIGHGRLFGFYVAFYCAGRF, and INSFTSTFVFIGAVVYIILAP. The disordered stretch occupies residues 349 to 468; it reads VVQVADRDGE…RWWRLRRRRQ (120 aa). Residues 391–406 show a composition bias toward low complexity; sequence AEAASAAPEEPAALAS. A compositionally biased stretch (basic and acidic residues) spans 445–455; sequence DGIRRQDDFSS. Residues 456–468 show a composition bias toward basic residues; that stretch reads RRRRWWRLRRRRQ.

Belongs to the Lgt family.

The protein resides in the cell membrane. It catalyses the reaction L-cysteinyl-[prolipoprotein] + a 1,2-diacyl-sn-glycero-3-phospho-(1'-sn-glycerol) = an S-1,2-diacyl-sn-glyceryl-L-cysteinyl-[prolipoprotein] + sn-glycerol 1-phosphate + H(+). It participates in protein modification; lipoprotein biosynthesis (diacylglyceryl transfer). Functionally, catalyzes the transfer of the diacylglyceryl group from phosphatidylglycerol to the sulfhydryl group of the N-terminal cysteine of a prolipoprotein, the first step in the formation of mature lipoproteins. The protein is Phosphatidylglycerol--prolipoprotein diacylglyceryl transferase of Mycobacterium bovis (strain ATCC BAA-935 / AF2122/97).